Reading from the N-terminus, the 384-residue chain is 1-deoxy-D-xylulose 5-phosphate reductoisomerase (384 aa).

NADPH is bound by residues T10, G11, S12, I13, G36, K37, N38, and N121. K122 is a 1-deoxy-D-xylulose 5-phosphate binding site. E123 contributes to the NADPH binding site. D147 contributes to the Mn(2+) binding site. Positions 148, 149, 173, and 196 each coordinate 1-deoxy-D-xylulose 5-phosphate. E149 serves as a coordination point for Mn(2+). G202 contributes to the NADPH binding site. S209, N214, K215, and E218 together coordinate 1-deoxy-D-xylulose 5-phosphate. Position 218 (E218) interacts with Mn(2+).

It belongs to the DXR family. Mg(2+) is required as a cofactor. It depends on Mn(2+) as a cofactor.

It catalyses the reaction 2-C-methyl-D-erythritol 4-phosphate + NADP(+) = 1-deoxy-D-xylulose 5-phosphate + NADPH + H(+). The protein operates within isoprenoid biosynthesis; isopentenyl diphosphate biosynthesis via DXP pathway; isopentenyl diphosphate from 1-deoxy-D-xylulose 5-phosphate: step 1/6. In terms of biological role, catalyzes the NADPH-dependent rearrangement and reduction of 1-deoxy-D-xylulose-5-phosphate (DXP) to 2-C-methyl-D-erythritol 4-phosphate (MEP). The polypeptide is 1-deoxy-D-xylulose 5-phosphate reductoisomerase (Exiguobacterium sibiricum (strain DSM 17290 / CCUG 55495 / CIP 109462 / JCM 13490 / 255-15)).